The primary structure comprises 101 residues: RNA-binding protein Hfq (101 aa).

The Sm domain occupies 9 to 68; it reads DPFLNALRRERVPVSIYLVNGIKLQGQVESFDQFVILLKNTVSQMVYKHAISTVVPSPPV. Positions 62-101 are disordered; that stretch reads VVPSPPVSHHSNTPSGSTNNYHGSNPSAPQQPQQDSDDAE. The span at 70 to 86 shows a compositional bias: polar residues; the sequence is HHSNTPSGSTNNYHGSN.

The protein belongs to the Hfq family. As to quaternary structure, homohexamer.

Functionally, RNA chaperone that binds small regulatory RNA (sRNAs) and mRNAs to facilitate mRNA translational regulation in response to envelope stress, environmental stress and changes in metabolite concentrations. Also binds with high specificity to tRNAs. The sequence is that of RNA-binding protein Hfq from Yersinia pestis (strain Pestoides F).